A 141-amino-acid polypeptide reads, in one-letter code: Small ribosomal subunit protein bS16 (141 aa).

2 stretches are compositionally biased toward polar residues: residues 89 to 101 (NVSV…TEAI) and 109 to 129 (ATAN…TATI). Residues 89-141 (NVSVSHAESTEAITNAEPIQATANTESNEVSDSESTATATIRESEEQPPISES) form a disordered region.

This sequence belongs to the bacterial ribosomal protein bS16 family.

The chain is Small ribosomal subunit protein bS16 from Trichodesmium erythraeum (strain IMS101).